A 405-amino-acid polypeptide reads, in one-letter code: Glycosylated lysosomal membrane protein A (405 aa).

The signal sequence occupies residues 1–25; it reads MGCTRGWRLLLLLGLVCVGALQGRG. The Lumenal segment spans residues 26–365; that stretch reads QEESREVSLQ…YGEPPRDSFS (340 aa). Asparagine 55, asparagine 86, asparagine 125, asparagine 129, asparagine 143, asparagine 153, asparagine 157, asparagine 164, asparagine 169, asparagine 179, asparagine 206, asparagine 222, asparagine 267, asparagine 304, and asparagine 331 each carry an N-linked (GlcNAc...) asparagine glycan. The helical transmembrane segment at 366–386 threads the bilayer; that stretch reads ILVICIMAVALGTPLLLLIVG. The Cytoplasmic segment spans residues 387–405; that stretch reads TLVVTALRHKVYSNYEPIN. A Lysosomal targeting motif motif is present at residues 401-405; that stretch reads YEPIN.

The protein belongs to the GLMP family. As to quaternary structure, interacts (via lumenal domain) with lysosomal protein MFSD1; the interaction starts while both proteins are still in the endoplasmic reticulum and is required for stabilization of MFSD1 in lysosomes but has no direct effect on its targeting to lysosomes or transporter activity.

It is found in the lysosome membrane. In terms of biological role, required to protect lysosomal transporter MFSD1 from lysosomal proteolysis and for MFSD1 lysosomal localization. The polypeptide is Glycosylated lysosomal membrane protein A (glmp-a) (Xenopus laevis (African clawed frog)).